The primary structure comprises 236 residues: 2-C-methyl-D-erythritol 4-phosphate cytidylyltransferase (236 aa).

The protein belongs to the IspD/TarI cytidylyltransferase family. IspD subfamily. In terms of assembly, homodimer.

It catalyses the reaction 2-C-methyl-D-erythritol 4-phosphate + CTP + H(+) = 4-CDP-2-C-methyl-D-erythritol + diphosphate. Its pathway is isoprenoid biosynthesis; isopentenyl diphosphate biosynthesis via DXP pathway; isopentenyl diphosphate from 1-deoxy-D-xylulose 5-phosphate: step 2/6. In terms of biological role, catalyzes the formation of 4-diphosphocytidyl-2-C-methyl-D-erythritol from CTP and 2-C-methyl-D-erythritol 4-phosphate (MEP). This Salmonella newport (strain SL254) protein is 2-C-methyl-D-erythritol 4-phosphate cytidylyltransferase.